A 108-amino-acid polypeptide reads, in one-letter code: MDQFECINVADAHQKLQEKEAVLVDIRDPQSFAMGHAAQAFHLTNDTLGAFMRDNDFDTPVMVMCYHGNSSKGAAQYLLQQGYDVVYSIDGGFEAWQRQFPAEVAYGA.

The 89-residue stretch at 17–105 folds into the Rhodanese domain; the sequence is QEKEAVLVDI…WQRQFPAEVA (89 aa). The Cysteine persulfide intermediate role is filled by Cys65.

It belongs to the GlpE family.

It is found in the cytoplasm. The catalysed reaction is thiosulfate + hydrogen cyanide = thiocyanate + sulfite + 2 H(+). It catalyses the reaction thiosulfate + [thioredoxin]-dithiol = [thioredoxin]-disulfide + hydrogen sulfide + sulfite + 2 H(+). Functionally, transferase that catalyzes the transfer of sulfur from thiosulfate to thiophilic acceptors such as cyanide or dithiols. May function in a CysM-independent thiosulfate assimilation pathway by catalyzing the conversion of thiosulfate to sulfite, which can then be used for L-cysteine biosynthesis. This is Thiosulfate sulfurtransferase GlpE from Escherichia coli O127:H6 (strain E2348/69 / EPEC).